The primary structure comprises 664 residues: MSELLLELFSEEMPAFMQKNAEEGYLNIFTKIFEENEIFAKVQVFVGPRRITLHATHLPKITLPKEEEIKGPSIEAPEAAINGFCKAHNVSKLELPTKLISNQLYYFFVKKTEEREIKEILPEIIIEAINKYSWAKSMFWGDYKIKWIRPLRNILCIFDGEILPMQFGHLTANNITYGHRLTDNKKLEVTDFEDYRNKLLENHVILERAKREAIIKTGLLELANSHELIIKEDNRLVEEVVGLSEFPVVLLGKIPQKFLELPKEVLISSMRTHQKYFCLFDKTGNFTPYFLFVSNGRFTNAELVIQGNEKVLSARLSDALYFCKQDIAKTLESRLGQLEAATFHAKLGNLREKIERITDICNYIAPNNKDLITAARLCKSDLVSEMVGEFPDLQGIMGYYYAKHEGLNAEIAAAIRDHYKPQGLSDNLPSGNAALLALADKLDSLVGLMIAGETPTGSGDPYALRRQALGIIRIILENKLELNFNDLINFSINLYKDSSDENKNLIISFFKERAKFYFKNDYDIALINAVLDLNLVDTNFKLDALKEFLIEDAGKQLLNAYKRASNIIGDQKITGLVDASLFSTQPEKELFEVIQKISPQIIDSIADKDYKKALNLLSSLLTPITSFFDNVLVNDSDPKIAQNRLSLLQNICELFDKVAKFNRL.

The protein belongs to the class-II aminoacyl-tRNA synthetase family. As to quaternary structure, tetramer of two alpha and two beta subunits.

It is found in the cytoplasm. It carries out the reaction tRNA(Gly) + glycine + ATP = glycyl-tRNA(Gly) + AMP + diphosphate. The protein is Glycine--tRNA ligase beta subunit of Rickettsia africae (strain ESF-5).